Here is a 237-residue protein sequence, read N- to C-terminus: 2-C-methyl-D-erythritol 4-phosphate cytidylyltransferase (237 aa).

This sequence belongs to the IspD/TarI cytidylyltransferase family. IspD subfamily.

It catalyses the reaction 2-C-methyl-D-erythritol 4-phosphate + CTP + H(+) = 4-CDP-2-C-methyl-D-erythritol + diphosphate. It participates in isoprenoid biosynthesis; isopentenyl diphosphate biosynthesis via DXP pathway; isopentenyl diphosphate from 1-deoxy-D-xylulose 5-phosphate: step 2/6. Functionally, catalyzes the formation of 4-diphosphocytidyl-2-C-methyl-D-erythritol from CTP and 2-C-methyl-D-erythritol 4-phosphate (MEP). In Clostridioides difficile (strain 630) (Peptoclostridium difficile), this protein is 2-C-methyl-D-erythritol 4-phosphate cytidylyltransferase.